Consider the following 494-residue polypeptide: Glycerol kinase 1 (494 aa).

Residue threonine 12 participates in ADP binding. Positions 12, 13, and 14 each coordinate ATP. Threonine 12 serves as a coordination point for sn-glycerol 3-phosphate. Arginine 16 contributes to the ADP binding site. Residues arginine 82, glutamate 83, tyrosine 134, and aspartate 243 each coordinate sn-glycerol 3-phosphate. Glycerol is bound by residues arginine 82, glutamate 83, tyrosine 134, aspartate 243, and glutamine 244. Positions 265 and 308 each coordinate ADP. ATP-binding residues include threonine 265, glycine 308, glutamine 312, and glycine 408. Positions 408 and 412 each coordinate ADP.

This sequence belongs to the FGGY kinase family.

It carries out the reaction glycerol + ATP = sn-glycerol 3-phosphate + ADP + H(+). It participates in polyol metabolism; glycerol degradation via glycerol kinase pathway; sn-glycerol 3-phosphate from glycerol: step 1/1. Inhibited by fructose 1,6-bisphosphate (FBP). In terms of biological role, key enzyme in the regulation of glycerol uptake and metabolism. Catalyzes the phosphorylation of glycerol to yield sn-glycerol 3-phosphate. The polypeptide is Glycerol kinase 1 (Pseudomonas aeruginosa (strain ATCC 15692 / DSM 22644 / CIP 104116 / JCM 14847 / LMG 12228 / 1C / PRS 101 / PAO1)).